The sequence spans 275 residues: C-type lectin domain family 12 member B (275 aa).

Residues 1–41 lie on the Cytoplasmic side of the membrane; that stretch reads MSDEVTYATLMLQDSARVRGNQDGNNLRKEGHPAQSSLWRG. The ITIM motif motif lies at 5 to 10; that stretch reads VTYATL. Tyr-7 is subject to Phosphotyrosine. A helical; Signal-anchor for type II membrane protein transmembrane segment spans residues 42–64; the sequence is AALSLMTLCLVLVTGLVTLATMF. Residues 65–275 are Extracellular-facing; that stretch reads LQVSNDINSD…ASLVKTEDLD (211 aa). 3 N-linked (GlcNAc...) asparagine glycosylation sites follow: Asn-91, Asn-175, and Asn-236. Positions 149-263 constitute a C-type lectin domain; sequence YGNSCYYFSI…CSAEIPWICE (115 aa). 2 disulfides stabilise this stretch: Cys-171-Cys-262 and Cys-241-Cys-254.

Homodimer. Interacts (via ITIM motif) with PTPN6. Interacts (via ITIM motif) with PTPN11; this interaction triggers dephosphorylation and activation of PTPN11.

Its subcellular location is the cell membrane. Inhibitory receptor postulated to negatively regulate immune and non-immune functions. Upon phosphorylation, recruits SH2 domain-containing PTPN6 and PTPN11 phosphatases to its ITIM motif and antagonizes activation signals. Although it inhibits KLRK1/NKG2D-mediated signaling, it does not bind known ligands of KLRK1/NKG2D and therefore is not its inhibitory counterpart. May limit activation of myeloid cell subsets in response to infection or tissue inflammation. May protect target cells against natural killer cell-mediated lysis. May negatively regulate cell cycle and differentiation of melanocytes via inactivation of STAT3. The polypeptide is C-type lectin domain family 12 member B (Clec12b) (Mus musculus (Mouse)).